We begin with the raw amino-acid sequence, 128 residues long: Mite group 2 allergen Gly d 2.01 (128 aa).

Belongs to the NPC2 family.

The protein localises to the secreted. The polypeptide is Mite group 2 allergen Gly d 2.01 (Glycyphagus domesticus (House itch mite)).